The following is a 681-amino-acid chain: Dipeptidyl carboxypeptidase (681 aa).

H470 is a binding site for Zn(2+). The active site involves E471. The Zn(2+) site is built by H474 and H477.

It belongs to the peptidase M3 family. The cofactor is Zn(2+).

It is found in the cytoplasm. The enzyme catalyses Hydrolysis of unblocked, C-terminal dipeptides from oligopeptides, with broad specificity. Does not hydrolyze bonds in which P1' is Pro, or both P1 and P1' are Gly.. With respect to regulation, stimulated by Mn(2+), Mg(2+), Co(2+) and Ca(2+), inhibited by Cu(2+), Ni(2+), Zn(2+), chymostatin and 1,10-phenanthroline. Its function is as follows. Removes dipeptides from the C-termini of N-blocked tripeptides, tetrapeptides and larger peptides. In Escherichia coli (strain K12), this protein is Dipeptidyl carboxypeptidase.